The chain runs to 242 residues: Transcription factor Spi-C (242 aa).

Positions 112–195 (LRLFEYLFES…IRRKLTYQFS (84 aa)) form a DNA-binding region, ETS.

This sequence belongs to the ETS family. In terms of assembly, binds DNA as a monomer. As to expression, expressed in lymphoid tissues, including spleen, bone marrow and thymus. According to PubMed:19037245, highly expressed in red pulp macrophages and, at lower, levels in B-cells, but not in other cells, including, monocytes, dendritic cells and other tissue macrophages. According to PubMed:10464163 expressed in pre- and mature B-cells but not in immature B-cells; according to PubMed:10187812 not expressed in pre- but predominantly in mature B-cells and at lower levels in macrophages.

The protein localises to the nucleus. Functionally, controls the development of red pulp macrophages required for red blood cells recycling and iron homeostasis. Transcription factor that binds to the PU-box, a purine-rich DNA sequence (5'-GAGGA[AT]-3') that can act as a lymphoid-specific enhancer. Regulates VCAM1 gene expression. This Mus musculus (Mouse) protein is Transcription factor Spi-C (Spic).